The following is a 339-amino-acid chain: Tetraacyldisaccharide 4'-kinase (339 aa).

62 to 69 (VAGGTGKT) contacts ATP.

The protein belongs to the LpxK family.

It catalyses the reaction a lipid A disaccharide + ATP = a lipid IVA + ADP + H(+). The protein operates within glycolipid biosynthesis; lipid IV(A) biosynthesis; lipid IV(A) from (3R)-3-hydroxytetradecanoyl-[acyl-carrier-protein] and UDP-N-acetyl-alpha-D-glucosamine: step 6/6. Functionally, transfers the gamma-phosphate of ATP to the 4'-position of a tetraacyldisaccharide 1-phosphate intermediate (termed DS-1-P) to form tetraacyldisaccharide 1,4'-bis-phosphate (lipid IVA). The sequence is that of Tetraacyldisaccharide 4'-kinase from Xylella fastidiosa (strain M23).